We begin with the raw amino-acid sequence, 304 residues long: MDNINCLFNELLVIIIDFLSDNDKIKFITTCSRLYWFIDKIHYNSVYDYNKISHLSFVDKFKRIRFHAVNAGSIPSIVTDLVLDNNFTDSLKTCNLSKLLRIKLNFHQYKKNRNHILSNVKIDCSNSITISQIRYKTLKPTRLFSLIEPFSLLRPFILSDPYPINRIQIKGYDRDTNYGIPVHTPPEEILEDFGKHLEDIDKLITKNYKKFFPIKKSRPAYIPIVSRNSESSRQSNLNSPNDSVKFNEFNKSNKSTKTNPNNIHNIVTTMNSNKNFHKNKYKYQNRIIPKHSKYPKKFSKNKYH.

The segment covering Ser-226 to Val-244 has biased composition (polar residues). Residues Ser-226–Ile-263 are disordered. The span at Phe-246–Asn-262 shows a compositional bias: low complexity.

This is an uncharacterized protein from Acanthamoeba polyphaga (Amoeba).